The following is a 122-amino-acid chain: uncharacterized protein (122 aa).

This is an uncharacterized protein from Escherichia coli O157:H7.